A 117-amino-acid polypeptide reads, in one-letter code: Tyrosine-protein phosphatase 25 (117 aa).

Positions 1 to 117 (WLMIIEQKCN…DLIGQSPIVV (117 aa)) constitute a Tyrosine-protein phosphatase domain. Asp-85 provides a ligand contact to substrate.

Belongs to the protein-tyrosine phosphatase family.

It carries out the reaction O-phospho-L-tyrosyl-[protein] + H2O = L-tyrosyl-[protein] + phosphate. The polypeptide is Tyrosine-protein phosphatase 25 (STY-25) (Styela plicata (Wrinkled sea squirt)).